Consider the following 178-residue polypeptide: Lipid A deacylase PagL (178 aa).

An N-terminal signal peptide occupies residues 1–19; sequence MQFLKKNKPLFGIVTLALA. Active-site charge relay system residues include histidine 154, serine 156, and aspartate 168.

The protein belongs to the PagL family. Homodimer.

The protein resides in the cell outer membrane. It catalyses the reaction a 3-(acyloxy)acyl derivative of bacterial toxin + H2O = a 3-hydroxyacyl derivative of bacterial toxin + a fatty acid + H(+). Its function is as follows. Has lipid A 3-O-deacylase activity. Hydrolyzes the ester bond at the 3 position of lipid A, a bioactive component of lipopolysaccharide (LPS), thereby releasing the primary fatty acyl moiety. The sequence is that of Lipid A deacylase PagL from Bordetella bronchiseptica (strain ATCC BAA-588 / NCTC 13252 / RB50) (Alcaligenes bronchisepticus).